We begin with the raw amino-acid sequence, 405 residues long: S-adenosylmethionine synthase (405 aa).

An ATP-binding site is contributed by 141 to 146 (GQGSVD).

This sequence belongs to the AdoMet synthase 2 family. It depends on Mg(2+) as a cofactor.

The catalysed reaction is L-methionine + ATP + H2O = S-adenosyl-L-methionine + phosphate + diphosphate. It participates in amino-acid biosynthesis; S-adenosyl-L-methionine biosynthesis; S-adenosyl-L-methionine from L-methionine: step 1/1. Functionally, catalyzes the formation of S-adenosylmethionine from methionine and ATP. In Methanococcus maripaludis (strain C5 / ATCC BAA-1333), this protein is S-adenosylmethionine synthase.